Consider the following 287-residue polypeptide: ATP synthase subunit a (287 aa).

Helical transmembrane passes span 37–57 (LDSV…MWLA), 96–116 (FIAP…AMDL), 144–164 (DLST…VYSI), 187–207 (PVFA…EYVA), 224–244 (ELVF…LSGV), and 266–286 (TLQA…AHEA).

Belongs to the ATPase A chain family. F-type ATPases have 2 components, CF(1) - the catalytic core - and CF(0) - the membrane proton channel. CF(1) has five subunits: alpha(3), beta(3), gamma(1), delta(1), epsilon(1). CF(0) has three main subunits: a(1), b(2) and c(9-12). The alpha and beta chains form an alternating ring which encloses part of the gamma chain. CF(1) is attached to CF(0) by a central stalk formed by the gamma and epsilon chains, while a peripheral stalk is formed by the delta and b chains.

Its subcellular location is the cell inner membrane. In terms of biological role, key component of the proton channel; it plays a direct role in the translocation of protons across the membrane. In Acidovorax ebreus (strain TPSY) (Diaphorobacter sp. (strain TPSY)), this protein is ATP synthase subunit a.